Reading from the N-terminus, the 170-residue chain is Peptide deformylase (170 aa).

Fe cation-binding residues include Cys94 and His136. Glu137 is a catalytic residue. Residue His140 participates in Fe cation binding.

Belongs to the polypeptide deformylase family. Fe(2+) is required as a cofactor.

It catalyses the reaction N-terminal N-formyl-L-methionyl-[peptide] + H2O = N-terminal L-methionyl-[peptide] + formate. In terms of biological role, removes the formyl group from the N-terminal Met of newly synthesized proteins. Requires at least a dipeptide for an efficient rate of reaction. N-terminal L-methionine is a prerequisite for activity but the enzyme has broad specificity at other positions. This Xylella fastidiosa (strain 9a5c) protein is Peptide deformylase.